Consider the following 256-residue polypeptide: Leucyl/phenylalanyl-tRNA--protein transferase (256 aa).

The protein belongs to the L/F-transferase family.

The protein localises to the cytoplasm. The enzyme catalyses N-terminal L-lysyl-[protein] + L-leucyl-tRNA(Leu) = N-terminal L-leucyl-L-lysyl-[protein] + tRNA(Leu) + H(+). The catalysed reaction is N-terminal L-arginyl-[protein] + L-leucyl-tRNA(Leu) = N-terminal L-leucyl-L-arginyl-[protein] + tRNA(Leu) + H(+). It catalyses the reaction L-phenylalanyl-tRNA(Phe) + an N-terminal L-alpha-aminoacyl-[protein] = an N-terminal L-phenylalanyl-L-alpha-aminoacyl-[protein] + tRNA(Phe). In terms of biological role, functions in the N-end rule pathway of protein degradation where it conjugates Leu, Phe and, less efficiently, Met from aminoacyl-tRNAs to the N-termini of proteins containing an N-terminal arginine or lysine. The chain is Leucyl/phenylalanyl-tRNA--protein transferase from Hydrogenovibrio crunogenus (strain DSM 25203 / XCL-2) (Thiomicrospira crunogena).